The chain runs to 155 residues: MFFIVAAGFVIAALIAAIGMAINRFFVRRRQARAGQTKPATTRPMAEARARPGATAVPRRSPTSPQSAYVPATVYTSPIGSPRRGSVRYTHVMAHPNTTTTVSENLPEEVPPPYSPAATASNTPQNEASPAATEAVNHERPASPPPVYRPPEEMV.

An N-terminal signal peptide occupies residues 1 to 21 (MFFIVAAGFVIAALIAAIGMA). The disordered stretch occupies residues 35-155 (GQTKPATTRP…PVYRPPEEMV (121 aa)). The segment covering 118-128 (ATASNTPQNEA) has biased composition (polar residues).

This is an uncharacterized protein from Schizosaccharomyces pombe (strain 972 / ATCC 24843) (Fission yeast).